The following is a 277-amino-acid chain: MKRDSGQKLPHVTTRRLLDMKEQGEKIAMLTAYDYTTARILDRSGVDVILVGDSVSNVFSGHNTTLPITIEEMIYHAKAVVRGVQAETSRSMVVIDMPFMSYQLSSEEALRNAGKIMKDNECDAVKMEGGKVVVDTVKRITDVGIPVMGHLGLIPQSIYKFGSYKVRAREQKEAEELLRDAVLLEQAGAFALVLEKIPADLAAEVTRTVGIPTIGIGAGSFCDGQVLVINDMLGLNTEFHPRFVRRYADLDGVIFDAVTGYVDDVRNGQFPAEDESY.

Residues aspartate 53 and aspartate 96 each contribute to the Mg(2+) site. 3-methyl-2-oxobutanoate is bound by residues 53 to 54 (DS), aspartate 96, and lysine 126. Glutamate 128 serves as a coordination point for Mg(2+). The active-site Proton acceptor is glutamate 195.

Belongs to the PanB family. Homodecamer; pentamer of dimers. Mg(2+) serves as cofactor.

The protein resides in the cytoplasm. The enzyme catalyses 3-methyl-2-oxobutanoate + (6R)-5,10-methylene-5,6,7,8-tetrahydrofolate + H2O = 2-dehydropantoate + (6S)-5,6,7,8-tetrahydrofolate. The protein operates within cofactor biosynthesis; (R)-pantothenate biosynthesis; (R)-pantoate from 3-methyl-2-oxobutanoate: step 1/2. Functionally, catalyzes the reversible reaction in which hydroxymethyl group from 5,10-methylenetetrahydrofolate is transferred onto alpha-ketoisovalerate to form ketopantoate. The chain is 3-methyl-2-oxobutanoate hydroxymethyltransferase from Chlorobium phaeobacteroides (strain BS1).